Here is a 266-residue protein sequence, read N- to C-terminus: Cell division cycle-associated protein 3 (266 aa).

Positions 1-84 (MGSTQSVSGT…TPMKISGPDP (84 aa)) are disordered. Phosphoserine is present on residues S29 and S31. The span at 32 to 46 (AGIQRTPIQVESSPQ) shows a compositional bias: polar residues. T37 carries the phosphothreonine modification. Phosphoserine is present on residues S44 and S67. T75 carries the post-translational modification Phosphothreonine. Residues 90 to 119 (KELSEVLETEASESISSPELALPRETPLFY) form an F-box-like region. S93 is modified (phosphoserine). Disordered regions lie at residues 120-225 (DLDL…LSEN) and 242-266 (KAGG…LLES). Residues 143 to 156 (LDPKQVFTKEEAKQ) show a composition bias toward basic and acidic residues. Over residues 157–168 (SAETIAASQNSD) the composition is skewed to polar residues. Position 197 is a phosphoserine (S197). At T200 the chain carries Phosphothreonine. Residues 203–213 (QDDNSPGTLTL) are compositionally biased toward polar residues. S207 carries the phosphoserine modification. T210 carries the phosphothreonine modification. The segment covering 250-259 (PNQDHDKENQ) has biased composition (basic and acidic residues). The short motif at 256–258 (KEN) is the KEN box element.

In terms of assembly, interacts with SKP1. Part of a SCF (SKP1-cullin-F-box) protein ligase complex. In terms of processing, ubiquitinated and degraded by the APC/C-Cdh1 complex.

Its subcellular location is the cytoplasm. It is found in the cytosol. It functions in the pathway protein modification; protein ubiquitination. Its function is as follows. F-box-like protein which is required for entry into mitosis. Acts by participating in E3 ligase complexes that mediate the ubiquitination and degradation of WEE1 kinase at G2/M phase. This chain is Cell division cycle-associated protein 3 (Cdca3), found in Mus musculus (Mouse).